The chain runs to 249 residues: Nodulation protein H (249 aa).

In terms of biological role, required for the formation of sulfated nod factor. Proposed to transfer activated sulfate (PAPS) to a N-acetylglucosamine of the nod factor. In Rhizobium tropici, this protein is Nodulation protein H (nodH).